We begin with the raw amino-acid sequence, 299 residues long: Junctional adhesion molecule A (299 aa).

The first 27 residues, 1–27, serve as a signal peptide directing secretion; it reads MGTKAQVERKLLCLFILAILLCSLALG. 2 Ig-like V-type domains span residues 28-125 and 135-228; these read SVTV…VKVK and PTVN…NAVR. The Extracellular portion of the chain corresponds to 28–238; that stretch reads SVTVHSSEPE…MEAVERNVGV (211 aa). 2 cysteine pairs are disulfide-bonded: C50-C109 and C153-C212. N185 carries an N-linked (GlcNAc...) asparagine glycan. Residues 239–259 traverse the membrane as a helical segment; it reads IVAAVLVTLILLGILVFGIWF. Over 260–299 the chain is Cytoplasmic; sequence AYSRGHFDRTKKGTSSKKVIYSQPSARSEGEFKQTSSFLV. 3 positions are modified to phosphoserine: S281, S284, and S287.

It belongs to the immunoglobulin superfamily. As to quaternary structure, interacts with the ninth PDZ domain of MPDZ. Interacts with the first PDZ domain of PARD3. The association between PARD3 and PARD6B probably disrupts this interaction. Interacts with ITGAL (via I-domain). Interacts with CD151. (Microbial infection) Interacts with Mammalian reovirus sigma-1 capsid protein. In terms of assembly, (Microbial infection) Interacts with Human Rotavirus strain Wa vp4 capsid protein. Post-translationally, N-glycosylated. In terms of processing, (Microbial infection) Cleaved by H.pylori virulence factor PqqE. Cleavage leads to altered tight junction functions. Expressed in endothelium, epithelium and leukocytes (at protein level).

Its subcellular location is the cell junction. The protein resides in the tight junction. The protein localises to the cell membrane. Its function is as follows. Seems to play a role in epithelial tight junction formation. Appears early in primordial forms of cell junctions and recruits PARD3. The association of the PARD6-PARD3 complex may prevent the interaction of PARD3 with JAM1, thereby preventing tight junction assembly. Plays a role in regulating monocyte transmigration involved in integrity of epithelial barrier. Ligand for integrin alpha-L/beta-2 involved in memory T-cell and neutrophil transmigration. Involved in platelet activation. (Microbial infection) Acts as a receptor for Mammalian reovirus sigma-1. In terms of biological role, (Microbial infection) Acts as a receptor for Human Rotavirus strain Wa. The chain is Junctional adhesion molecule A (F11R) from Homo sapiens (Human).